Here is a 465-residue protein sequence, read N- to C-terminus: Pancreatic triacylglycerol lipase (465 aa).

The N-terminal stretch at 1–16 (MLLLWALPLLLGAVAG) is a signal peptide. Cystine bridges form between Cys20/Cys26 and Cys108/Cys119. Ser170 (nucleophile) is an active-site residue. Catalysis depends on Asp194, which acts as the Charge relay system. The Ca(2+) site is built by Glu205, Arg208, Asp210, and Asp213. A disulfide bridge links Cys255 with Cys279. Residue His281 is the Charge relay system of the active site. 3 disulfide bridges follow: Cys303–Cys314, Cys317–Cys321, and Cys449–Cys465. Residues 355–465 (WRYQVAVTLS…EDILLTLTPC (111 aa)) enclose the PLAT domain.

Belongs to the AB hydrolase superfamily. Lipase family. In terms of assembly, forms a 1:1 stoichiometric complex with (pro)colipase/CLPS.

It localises to the secreted. It catalyses the reaction a triacylglycerol + H2O = a diacylglycerol + a fatty acid + H(+). The catalysed reaction is 1,2,3-tributanoylglycerol + H2O = dibutanoylglycerol + butanoate + H(+). The enzyme catalyses 1,2,3-tri-(9Z-octadecenoyl)-glycerol + H2O = di-(9Z)-octadecenoylglycerol + (9Z)-octadecenoate + H(+). It carries out the reaction all-trans-retinyl hexadecanoate + H2O = all-trans-retinol + hexadecanoate + H(+). It catalyses the reaction 1,2-di-(9Z-octadecenoyl)-glycerol + H2O = (9Z-octadecenoyl)-glycerol + (9Z)-octadecenoate + H(+). With respect to regulation, inhibited by bile salts, is reactivated by (pro)colipase/CLPS. In terms of biological role, plays an important role in fat metabolism. It preferentially splits the esters of long-chain fatty acids at positions 1 and 3, producing mainly 2-monoacylglycerol and free fatty acids, and shows considerably higher activity against insoluble emulsified substrates than against soluble ones. This is Pancreatic triacylglycerol lipase (PNLIP) from Oryctolagus cuniculus (Rabbit).